A 100-amino-acid polypeptide reads, in one-letter code: Urease subunit gamma (100 aa).

It belongs to the urease gamma subunit family. As to quaternary structure, heterotrimer of UreA (gamma), UreB (beta) and UreC (alpha) subunits. Three heterotrimers associate to form the active enzyme.

The protein localises to the cytoplasm. It carries out the reaction urea + 2 H2O + H(+) = hydrogencarbonate + 2 NH4(+). The protein operates within nitrogen metabolism; urea degradation; CO(2) and NH(3) from urea (urease route): step 1/1. In Jannaschia sp. (strain CCS1), this protein is Urease subunit gamma.